The following is a 229-amino-acid chain: MAKKSKALRAAIEKIDATKLYSVEEAVALAKETSFAKFDATVEVAYNLNIDVKKSDQQIRGAMVLPNGTGKTARVLVFAKGAKAEEATAAGADFVGSDELVAKINGGWLDFDVVIATPDMMAVVGRLGRVLGPRNLMPNPKTGTVTMDVTKAVEESKAGKVNYRADKAGNVHVPIGKVSFDTEKLVENFKALNSVIAAAKPAASKGAYITNLSVTTTMGPGVKVDSASF.

The protein belongs to the universal ribosomal protein uL1 family. As to quaternary structure, part of the 50S ribosomal subunit.

Its function is as follows. Binds directly to 23S rRNA. The L1 stalk is quite mobile in the ribosome, and is involved in E site tRNA release. Functionally, protein L1 is also a translational repressor protein, it controls the translation of the L11 operon by binding to its mRNA. The polypeptide is Large ribosomal subunit protein uL1 (Lactococcus lactis subsp. lactis (strain IL1403) (Streptococcus lactis)).